The primary structure comprises 201 residues: Akirin (201 aa).

A disordered region spans residues 1–133 (MACATLKRAL…PRRPDSPQNL (133 aa)). The Nuclear localization signal motif lies at 20–25 (PKRRRC). Residues serine 39 and serine 41 each carry the phosphoserine modification. Composition is skewed to polar residues over residues 44 to 57 (GPSTSAGLPHTPSN) and 65 to 75 (EPSPFSESSLA). At serine 67 the chain carries Phosphoserine. The segment covering 112 to 122 (SESSGSEMGPE) has biased composition (low complexity). Phosphoserine occurs at positions 123 and 129.

It belongs to the akirin family. Interacts with dmap1. Interacts with bap60 and rel; interaction is immune stimulation-dependent; activates selected rel target gene promoters. Interacts with bap55; interaction is immune stimulation-dependent. Interacts with twi. Polyubiquitinated via 'Lys-63'-linked ubiquitin by Hyd, promoting interaction with rel. In terms of tissue distribution, ubiquitous.

It localises to the nucleus. In terms of biological role, molecular adapter that acts as a bridge between a variety of multiprotein complexes, and which is required for embryonic development and for normal innate immune response. Acts as a regulator of embryonic myogenesis by bridging Twist (twi) with the SWI/SNF-like Brahma complex, promoting expression of twi-regulated genes during myogenesis. Effector of immune deficiency pathway (Imd) by acting either downstream of, or at the level of, the NF-kappa-B factor Relish (Rel). Acts by bridging the NF-kappa-B factor Rel and the Brahma complex through bap60 interaction, leading to activation a subset of NF-kappa-B factor Relish (Rel) effector genes. Not part of the Toll pathway. Required for the formation of the heart by promoting expression ot tinman (tin). The sequence is that of Akirin from Drosophila melanogaster (Fruit fly).